A 482-amino-acid polypeptide reads, in one-letter code: Adenylosuccinate lyase (482 aa).

Residues 14–15 (RY), 82–84 (RHD), and 108–109 (TS) each bind substrate. H156 serves as the catalytic Proton donor/acceptor. K196 is covalently cross-linked (Glycyl lysine isopeptide (Lys-Gly) (interchain with G-Cter in ubiquitin)). Q238 provides a ligand contact to substrate. The active-site Proton donor/acceptor is S286. Residues R300, R326, S331, and R335 each contribute to the substrate site.

It belongs to the lyase 1 family. Adenylosuccinate lyase subfamily. As to quaternary structure, homotetramer. Residues from neighboring subunits contribute catalytic and substrate-binding residues to each active site.

The catalysed reaction is N(6)-(1,2-dicarboxyethyl)-AMP = fumarate + AMP. It catalyses the reaction (2S)-2-[5-amino-1-(5-phospho-beta-D-ribosyl)imidazole-4-carboxamido]succinate = 5-amino-1-(5-phospho-beta-D-ribosyl)imidazole-4-carboxamide + fumarate. The protein operates within purine metabolism; AMP biosynthesis via de novo pathway; AMP from IMP: step 2/2. Its pathway is purine metabolism; IMP biosynthesis via de novo pathway; 5-amino-1-(5-phospho-D-ribosyl)imidazole-4-carboxamide from 5-amino-1-(5-phospho-D-ribosyl)imidazole-4-carboxylate: step 2/2. This is Adenylosuccinate lyase (ADE13) from Saccharomyces cerevisiae (strain ATCC 204508 / S288c) (Baker's yeast).